The following is a 134-amino-acid chain: MNQRLQRLADQIQRELAVLIRDAVNDPRLTGFVTISSIKVSPDLGYADVYVTIMEPELNDAMTMSNHEESIKVLNKAAGFLRTELSHSLKTRTTPRLRFHYDEVTARGNYMMDLISKAVIKTEENESDEQENEE.

The protein belongs to the RbfA family. Monomer. Binds 30S ribosomal subunits, but not 50S ribosomal subunits or 70S ribosomes.

It is found in the cytoplasm. One of several proteins that assist in the late maturation steps of the functional core of the 30S ribosomal subunit. Associates with free 30S ribosomal subunits (but not with 30S subunits that are part of 70S ribosomes or polysomes). Required for efficient processing of 16S rRNA. May interact with the 5'-terminal helix region of 16S rRNA. In Psychrobacter cryohalolentis (strain ATCC BAA-1226 / DSM 17306 / VKM B-2378 / K5), this protein is Ribosome-binding factor A.